The sequence spans 529 residues: Keratin, type II cytoskeletal 74 (529 aa).

The segment at 1 to 139 is head; it reads MSRQLNIKSS…DPEIQKVRAQ (139 aa). Residues 140 to 175 are coil 1A; sequence EREQIKVLNDKFASFIDKVRFLEQQNQVLETKWELL. The 314-residue stretch at 140 to 453 folds into the IF rod domain; it reads EREQIKVLND…KLLEGEECRM (314 aa). Residues 176–194 are linker 1; it reads QQLDLNNCKKNLEPILEGY. The coil 1B stretch occupies residues 195–286; that stretch reads ISNLRKQLET…CLYDAEIAQI (92 aa). Residues 287 to 310 form a linker 12 region; sequence QTHASETSVILSMDNNRDLDLDSI. The coil 2 stretch occupies residues 311-449; that stretch reads IAEVRMHYEE…ATYRKLLEGE (139 aa). A tail region spans residues 450–529; it reads ECRMSGENPS…ASIPARKATR (80 aa). Over residues 484-500 the composition is skewed to low complexity; it reads GASAVAGSSGSTQSGQT. The interval 484–529 is disordered; that stretch reads GASAVAGSSGSTQSGQTKTTEARGGDLKDTQGKSTPASIPARKATR. The span at 503 to 514 shows a compositional bias: basic and acidic residues; sequence TEARGGDLKDTQ. Residue Thr-513 is modified to Phosphothreonine.

This sequence belongs to the intermediate filament family. Heterotetramer of two type I and two type II keratins. Highly expressed in hair follicles from scalp. In hair, it is specifically present in the inner root sheath (IRS) of the hair follicle. Present in the IRS Huxley layer, but not in Henle layer or cuticle of the IRS. In the IRS Huxley layer, it is expressed in specialized Huxley cells, termed 'Fluegelzellen, along the area of differentiated Henle cells (at protein level).

Functionally, has a role in hair formation. Specific component of keratin intermediate filaments in the inner root sheath (IRS) of the hair follicle. The chain is Keratin, type II cytoskeletal 74 (KRT74) from Homo sapiens (Human).